We begin with the raw amino-acid sequence, 405 residues long: Phosphopentomutase (405 aa).

Mn(2+)-binding residues include Asp10, Asp305, His310, Asp346, His347, and His358.

Belongs to the phosphopentomutase family. The cofactor is Mn(2+).

The protein localises to the cytoplasm. It catalyses the reaction 2-deoxy-alpha-D-ribose 1-phosphate = 2-deoxy-D-ribose 5-phosphate. The catalysed reaction is alpha-D-ribose 1-phosphate = D-ribose 5-phosphate. The protein operates within carbohydrate degradation; 2-deoxy-D-ribose 1-phosphate degradation; D-glyceraldehyde 3-phosphate and acetaldehyde from 2-deoxy-alpha-D-ribose 1-phosphate: step 1/2. In terms of biological role, isomerase that catalyzes the conversion of deoxy-ribose 1-phosphate (dRib-1-P) and ribose 1-phosphate (Rib-1-P) to deoxy-ribose 5-phosphate (dRib-5-P) and ribose 5-phosphate (Rib-5-P), respectively. The polypeptide is Phosphopentomutase (Methylobacterium sp. (strain 4-46)).